Here is a 229-residue protein sequence, read N- to C-terminus: Matrix protein (229 aa).

The dynamin binding motif lies at 2 to 4 (QRL). The PPXY motif motif lies at 30–33 (PPSY). The PTAP/PSAP motif motif lies at 42–45 (PTAP).

Belongs to the vesiculoviruses matrix protein family. In terms of assembly, homomultimer. Interacts with viral nucleocapsid; this interaction contributes to the virion assembly. Interacts with the viral envelope glycoprotein; this interaction contributes to the virion assembly. Interacts with host RAE1-NUP98 complex. Interacts with host NEDD4 and TSG101. Interacts with host dynamin. Interacts with host NDUFAF4; the interaction inhibits viral propagation and is independent of interferon activation. Interacts with host GTF2H5; the interaction may inhibit host transcription. Interacts with host DRG1. Interaction with host CTDNEP1. Interaction with host ABCE1. Post-translationally, phosphorylated by host.

It localises to the virion. The protein localises to the host endomembrane system. Its subcellular location is the host nucleus membrane. It is found in the host nucleus. The protein resides in the host cytoplasm. Its function is as follows. Forms a double layer around the helical nucleocapsid, the inner matrix layer binding to the N helix and the outer matrix layer binding to the envelope glycoprotein. Plays a major role in assembly and budding of virion, by recruiting cellular partners of the ESCRT complexes that play a key role in releasing the budding particle from the host membrane. Condensates the ribonucleocapsid core during virus assembly. Inhibits the host mRNA nuclear export thereby inducing the shut off of cellular transcription and preventing the interferon signaling and the establishment of antiviral state in infected cells. This shutoff presumably inhibits interferon signaling and thus establishment of antiviral state in virus infected cells. Induces cell-rounding, cytoskeleton disorganization and apoptosis in infected cell. Inhibits host transcription, possibly through interaction with host DNA repair factor IIH/TFIIH GTF2H5 subunit. This Homo sapiens (Human) protein is Matrix protein (M).